Here is a 230-residue protein sequence, read N- to C-terminus: uncharacterized protein (230 aa).

Residue 10–34 (VVTGASSGIGEAIAKKLSQQGASIV) coordinates NADP(+). Ser139 is a binding site for substrate. The Proton acceptor role is filled by Tyr152.

Belongs to the short-chain dehydrogenases/reductases (SDR) family.

This is an uncharacterized protein from Staphylococcus epidermidis (strain ATCC 12228 / FDA PCI 1200).